Consider the following 78-residue polypeptide: Glycophorin-E (78 aa).

The signal sequence occupies residues 1-19 (MYGKIIFVLLLSGIVSISA). Over 20–52 (SSTTGVAMHTSTSSSVTKSYISSQTNGITLINW) the chain is Extracellular. The chain crosses the membrane as a helical span at residues 53-73 (WAMARVIFEVMLVVVGMIILI). Topologically, residues 74-78 (SYCIR) are cytoplasmic.

It belongs to the glycophorin-A family. The N-terminal extracellular domain is heavily glycosylated on serine and threonine residues. As to expression, erythrocytes.

It is found in the membrane. In terms of biological role, this protein is a minor sialoglycoprotein in human erythrocyte membranes. This is Glycophorin-E (GYPE) from Homo sapiens (Human).